The primary structure comprises 293 residues: Lymphocyte antigen 6 complex locus protein G6f (293 aa).

The N-terminal stretch at 1 to 19 is a signal peptide; it reads MAMVVFLLLYLCGHPQAAA. Residues 20-124 enclose the Ig-like V-type domain; it reads DNIQTLYVPS…HKYQNWRVYD (105 aa). At 20-237 the chain is on the extracellular side; that stretch reads DNIQTLYVPS…APLPSWDVSW (218 aa). A disulfide bond links Cys-37 and Cys-108. N-linked (GlcNAc...) asparagine glycosylation is present at Asn-90. A helical membrane pass occupies residues 238 to 258; it reads ILMLLFAAGQGVTIIALSIVI. The Cytoplasmic segment spans residues 259–293; that stretch reads WRHQRAQGTQDREPSIPHFKPEVQVYENIHLARLR. Tyr-284 carries the phosphotyrosine modification.

In terms of assembly, homodimer; disulfide-linked. Interacts with GRB2 and GRB7 in a phosphorylation-dependent manner. In terms of processing, N-glycosylated.

The protein localises to the cell membrane. Its function is as follows. May play a role in the downstream signal transduction pathways involving GRB2 and GRB7. The chain is Lymphocyte antigen 6 complex locus protein G6f (Ly6g6f) from Rattus norvegicus (Rat).